The primary structure comprises 136 residues: Large ribosomal subunit protein uL16 (136 aa).

It belongs to the universal ribosomal protein uL16 family. In terms of assembly, part of the 50S ribosomal subunit.

In terms of biological role, binds 23S rRNA and is also seen to make contacts with the A and possibly P site tRNAs. The chain is Large ribosomal subunit protein uL16 from Rickettsia prowazekii (strain Madrid E).